A 91-amino-acid polypeptide reads, in one-letter code: N.vectensis toxin 8 (91 aa).

The first 26 residues, 1–26 (MNSLLKVAVVCLVMLVACFVPRVILT), serve as a signal peptide directing secretion. Disulfide bonds link Cys45/Cys76, Cys47/Cys67, and Cys60/Cys77.

In terms of tissue distribution, expressed in ectodermal gland cells.

Has toxic effects on zebrafish larvae. It causes contractile paralysis and twitching of the tail within 20 minutes, followed by death within 30 minutes. Does not show any toxicity when injected into arthropods (cherry shrimps or grass shrimps). The sequence is that of N.vectensis toxin 8 from Nematostella vectensis (Starlet sea anemone).